A 212-amino-acid polypeptide reads, in one-letter code: uncharacterized protein (212 aa).

Positions 53, 74, and 97 each coordinate S-adenosyl-L-methionine.

Belongs to the methyltransferase superfamily. YrrT family.

Its function is as follows. Could be a S-adenosyl-L-methionine-dependent methyltransferase. This is an uncharacterized protein from Bacillus cereus (strain ZK / E33L).